The primary structure comprises 130 residues: UPF0251 protein MmarC6_0272 (130 aa).

This sequence belongs to the UPF0251 family.

The protein is UPF0251 protein MmarC6_0272 of Methanococcus maripaludis (strain C6 / ATCC BAA-1332).